A 392-amino-acid polypeptide reads, in one-letter code: Putative nicotinate phosphoribosyltransferase (392 aa).

Residues Tyr21, Phe138, and Thr179 each contribute to the nicotinate site. His182 carries the post-translational modification Phosphohistidine. Residue Arg235 participates in nicotinate binding. The 5-phospho-alpha-D-ribose 1-diphosphate site is built by Ser240, Gly272, and Thr293. Zn(2+) is bound by residues Cys330, Cys333, Cys348, and Cys350.

The protein belongs to the NAPRTase family. Highly divergent. As to quaternary structure, homodimer. Forms a trimer of dimers in the crystal. In terms of processing, transiently phosphorylated on a His residue during the reaction cycle. Phosphorylation strongly increases the affinity for substrates and increases the rate of nicotinate D-ribonucleotide production. Dephosphorylation regenerates the low-affinity form of the enzyme, leading to product release.

It carries out the reaction nicotinate + 5-phospho-alpha-D-ribose 1-diphosphate + ATP + H2O = nicotinate beta-D-ribonucleotide + ADP + phosphate + diphosphate. It functions in the pathway cofactor biosynthesis; NAD(+) biosynthesis; nicotinate D-ribonucleotide from nicotinate: step 1/1. In terms of biological role, catalyzes the synthesis of beta-nicotinate D-ribonucleotide from nicotinate and 5-phospho-D-ribose 1-phosphate at the expense of ATP. The sequence is that of Putative nicotinate phosphoribosyltransferase from Thermoplasma acidophilum (strain ATCC 25905 / DSM 1728 / JCM 9062 / NBRC 15155 / AMRC-C165).